A 317-amino-acid chain; its full sequence is Aspartate carbamoyltransferase catalytic subunit (317 aa).

2 residues coordinate carbamoyl phosphate: R66 and T67. Residue K94 coordinates L-aspartate. Carbamoyl phosphate-binding residues include R116, H144, and Q147. Positions 177 and 231 each coordinate L-aspartate. 2 residues coordinate carbamoyl phosphate: G272 and P273.

Belongs to the aspartate/ornithine carbamoyltransferase superfamily. ATCase family. In terms of assembly, heterododecamer (2C3:3R2) of six catalytic PyrB chains organized as two trimers (C3), and six regulatory PyrI chains organized as three dimers (R2).

It catalyses the reaction carbamoyl phosphate + L-aspartate = N-carbamoyl-L-aspartate + phosphate + H(+). It functions in the pathway pyrimidine metabolism; UMP biosynthesis via de novo pathway; (S)-dihydroorotate from bicarbonate: step 2/3. Catalyzes the condensation of carbamoyl phosphate and aspartate to form carbamoyl aspartate and inorganic phosphate, the committed step in the de novo pyrimidine nucleotide biosynthesis pathway. The chain is Aspartate carbamoyltransferase catalytic subunit from Rhodopseudomonas palustris (strain ATCC BAA-98 / CGA009).